A 570-amino-acid chain; its full sequence is Urease subunit alpha (570 aa).

The Urease domain occupies Gly131 to Phe570. His136, His138, and Lys219 together coordinate Ni(2+). Residue Lys219 is modified to N6-carboxylysine. His221 is a binding site for substrate. The Ni(2+) site is built by His248 and His274. His322 (proton donor) is an active-site residue. Asp362 serves as a coordination point for Ni(2+).

Belongs to the metallo-dependent hydrolases superfamily. Urease alpha subunit family. In terms of assembly, heterotrimer of UreA (gamma), UreB (beta) and UreC (alpha) subunits. Three heterotrimers associate to form the active enzyme. Requires Ni cation as cofactor. Post-translationally, carboxylation allows a single lysine to coordinate two nickel ions.

The protein resides in the cytoplasm. The enzyme catalyses urea + 2 H2O + H(+) = hydrogencarbonate + 2 NH4(+). It functions in the pathway nitrogen metabolism; urea degradation; CO(2) and NH(3) from urea (urease route): step 1/1. This is Urease subunit alpha from Rhizobium meliloti (strain 1021) (Ensifer meliloti).